A 272-amino-acid polypeptide reads, in one-letter code: Zinc transporter ZupT (272 aa).

Transmembrane regions (helical) follow at residues Ile-11 to Val-31, Leu-40 to Ile-60, Leu-76 to Asp-96, Leu-126 to Ala-146, Ala-158 to Phe-178, Ala-189 to Phe-209, Val-211 to Leu-231, and Val-250 to Ala-270. Fe(2+)-binding residues include Asn-136 and Glu-139. Glu-139 and His-164 together coordinate Zn(2+). 3 residues coordinate Fe(2+): Asn-165, Glu-168, and Glu-197. Residue Glu-168 participates in Zn(2+) binding.

The protein belongs to the ZIP transporter (TC 2.A.5) family. ZupT subfamily.

The protein localises to the cell inner membrane. It catalyses the reaction Zn(2+)(in) = Zn(2+)(out). Its function is as follows. Mediates zinc uptake. May also transport other divalent cations. This Xanthomonas axonopodis pv. citri (strain 306) protein is Zinc transporter ZupT.